A 95-amino-acid polypeptide reads, in one-letter code: Small ribosomal subunit protein uS19 (95 aa).

This sequence belongs to the universal ribosomal protein uS19 family.

Protein S19 forms a complex with S13 that binds strongly to the 16S ribosomal RNA. This Thermosipho melanesiensis (strain DSM 12029 / CIP 104789 / BI429) protein is Small ribosomal subunit protein uS19.